The sequence spans 1093 residues: TATA element modulatory factor (1093 aa).

Disordered stretches follow at residues 38–80 and 108–189; these read WAET…SPKA and TIQK…DMKV. Positions 51 to 70 are enriched in polar residues; sequence SPVSGGWDTSTWGLKSNTEP. Phosphoserine occurs at positions 72, 77, 112, and 136. A compositionally biased stretch (basic and acidic residues) spans 123–137; it reads QRPEEEVKSSLHESL. Positions 139-158 are enriched in polar residues; the sequence is IGQSRTPETTESQVKDSSLC. Over residues 173 to 187 the composition is skewed to basic and acidic residues; sequence TEGKHEETVNKESDM. A phosphoserine mark is found at Ser199 and Ser217. Basic and acidic residues predominate over residues 229-238; the sequence is PKEQKHEDRQ. 2 disordered regions span residues 229–260 and 266–285; these read PKEQ…SDIE and SVIS…SKSS. Low complexity predominate over residues 246-257; the sequence is VSTFSSGTSTTS. Residues Ser328, Ser330, Ser333, Ser338, Ser344, Ser413, Ser542, Ser925, and Ser928 each carry the phosphoserine modification. The interaction with Elongin BC complex stretch occupies residues 333 to 342; the sequence is SLDSRSVSEI. Residues 439 to 922 adopt a coiled-coil conformation; that stretch reads EALSEKEDVC…QETIKEKERK (484 aa). Residues 919–939 form a disordered region; the sequence is KERKPFSVSSTPTMSRSSSIS. Residues 925–939 are compositionally biased toward low complexity; that stretch reads SVSSTPTMSRSSSIS. At Thr929 the chain carries Phosphothreonine. A Phosphoserine modification is found at Ser933. Residues 984–1092 are a coiled coil; the sequence is SIIENLQSQL…QIDELLRQSL (109 aa).

As to quaternary structure, interacts with TRNP1; may regulate TRNP1 proteasomal degradation. Component of the SNF/SWI transcription factor complexes. Interacts with RAB6A. Interacts with STAT3 and FER. Interacts with TCEB1. In terms of processing, phosphorylated by FER.

It is found in the cytoplasm. The protein localises to the nucleus. Its subcellular location is the golgi apparatus membrane. Functionally, potential coactivator of the androgen receptor. Mediates STAT3 degradation. May play critical roles in two RAB6-dependent retrograde transport processes: one from endosomes to the Golgi and the other from the Golgi to the ER. This protein binds the HIV-1 TATA element and inhibits transcriptional activation by the TATA-binding protein (TBP). The protein is TATA element modulatory factor (TMF1) of Homo sapiens (Human).